A 103-amino-acid chain; its full sequence is Small ribosomal subunit protein uS10 (103 aa).

Belongs to the universal ribosomal protein uS10 family. As to quaternary structure, part of the 30S ribosomal subunit.

In terms of biological role, involved in the binding of tRNA to the ribosomes. This chain is Small ribosomal subunit protein uS10, found in Marinomonas sp. (strain MWYL1).